A 101-amino-acid chain; its full sequence is Small ribosomal subunit protein uS14 (101 aa).

Belongs to the universal ribosomal protein uS14 family. Part of the 30S ribosomal subunit. Contacts proteins S3 and S10.

Binds 16S rRNA, required for the assembly of 30S particles and may also be responsible for determining the conformation of the 16S rRNA at the A site. This is Small ribosomal subunit protein uS14 from Photobacterium profundum (strain SS9).